The sequence spans 362 residues: Beta-ketoacyl-[acyl-carrier-protein] synthase III 2 (362 aa).

Residues cysteine 113 and histidine 251 contribute to the active site. The ACP-binding stretch occupies residues 252–256 (QANIR). Residue asparagine 281 is part of the active site.

The protein belongs to the thiolase-like superfamily. FabH family. In terms of assembly, homodimer.

The protein resides in the cytoplasm. It catalyses the reaction malonyl-[ACP] + acetyl-CoA + H(+) = 3-oxobutanoyl-[ACP] + CO2 + CoA. The protein operates within lipid metabolism; fatty acid biosynthesis. In terms of biological role, catalyzes the condensation reaction of fatty acid synthesis by the addition to an acyl acceptor of two carbons from malonyl-ACP. Catalyzes the first condensation reaction which initiates fatty acid synthesis and may therefore play a role in governing the total rate of fatty acid production. Possesses both acetoacetyl-ACP synthase and acetyl transacylase activities. Its substrate specificity determines the biosynthesis of branched-chain and/or straight-chain of fatty acids. This is Beta-ketoacyl-[acyl-carrier-protein] synthase III 2 from Vibrio cholerae serotype O1 (strain ATCC 39315 / El Tor Inaba N16961).